A 510-amino-acid chain; its full sequence is 11S globulin (510 aa).

The first 23 residues, 1 to 23, serve as a signal peptide directing secretion; the sequence is MAKPILLSISLCLVALVNGCLAQ. Intrachain disulfides connect C35–C68 and C111–C325. Residues 38-257 enclose the Cupin type-1 1 domain; sequence KRLVALEPSN…AFNVDTETAR (220 aa). Disordered regions lie at residues 194–239 and 284–319; these read AGNP…VFSG and WSREEQEREERKERERERESESERRQSRRGGRDDNG. A compositionally biased stretch (basic and acidic residues) spans 284–318; the sequence is WSREEQEREERKERERERESESERRQSRRGGRDDN. The NGXEET; peptidase recognition motif motif lies at 318–323; the sequence is NGLEET. Positions 331-480 constitute a Cupin type-1 2 domain; it reads ENIGDPSRAD…ALQIPREDAR (150 aa). Positions 487 to 510 are disordered; sequence QESTLVRSRPSSSRSSRSERRAEV.

It belongs to the 11S seed storage protein (globulins) family. Homohexamer. Can assemble in other multimeric configurations. Proteolytically processed from a single precursor to produce an acidic and a basic chain that are linked by a disulfide bond. In terms of tissue distribution, expressed in endosperm of the seed.

Its function is as follows. Seed storage protein. This Juglans nigra (Black walnut) protein is 11S globulin.